The following is a 585-amino-acid chain: Packaging protein UL32 (585 aa).

Residues 1 to 25 (MDRVESEEPMDGFESPVFSENTSSN) are disordered. 8 residues coordinate Zn(2+): Cys-107, Cys-110, His-187, Cys-193, Cys-408, Cys-411, His-484, and Cys-491. Zinc finger regions lie at residues 107 to 193 (CLVC…LHVC) and 408 to 491 (CMLC…DLLC).

It belongs to the herpesviridae UL32 protein family.

It is found in the host cytoplasm. The protein resides in the host nucleus. In terms of biological role, plays a role in efficient localization of neo-synthesized capsids to nuclear replication compartments, thereby controlling cleavage and packaging of virus genomic DNA. This is Packaging protein UL32 (26) from Varicella-zoster virus (strain Dumas) (HHV-3).